A 285-amino-acid chain; its full sequence is Putative cuticle collagen 75 (285 aa).

Triple-helical region stretches follow at residues 87-116 (GRIG…PGEL) and 133-261 (GPKG…PGLD). Positions 207–231 (PGAPGIPGEEGLSGPTGQPGSPGSI) are enriched in low complexity. The interval 207 to 257 (PGAPGIPGEEGLSGPTGQPGSPGSIGAMGYEGAYGDRGEPGPPGPIGRRGG) is disordered.

The protein belongs to the cuticular collagen family. In terms of assembly, collagen polypeptide chains are complexed within the cuticle by disulfide bonds and other types of covalent cross-links.

In terms of biological role, nematode cuticles are composed largely of collagen-like proteins. The cuticle functions both as an exoskeleton and as a barrier to protect the worm from its environment. In Caenorhabditis elegans, this protein is Putative cuticle collagen 75 (col-75).